The primary structure comprises 617 residues: Chitin elicitor receptor kinase 1 (617 aa).

Positions 1 to 23 (MKLKISLIAPILLLFSFFFAVES) are cleaved as a signal peptide. The Extracellular portion of the chain corresponds to 24–232 (KCRTSCPLAL…KSSKQDGVGA (209 aa)). Disulfide bonds link Cys25–Cys93, Cys29–Cys155, and Cys91–Cys153. N-linked (GlcNAc...) asparagine glycosylation is found at Asn40, Asn52, and Asn102. One can recognise a LysM 1; degenerate domain in the interval 46-74 (VINQNLNSSIAPYDQINFDPILRYNSNIK). The region spanning 108-140 (RQEDTYERVAISNYANLTTMESLQARNPFPATN) is the LysM 2; degenerate domain. Chitin is bound at residue 109–115 (QEDTYER). An N-linked (GlcNAc...) asparagine glycan is attached at Asn123. 137 to 143 (PATNIPL) is a binding site for chitin. A glycan (N-linked (GlcNAc...) asparagine) is linked at Asn152. In terms of domain architecture, LysM 3 spans 168–211 (VTYPLRPEDSLSSIARSSGVSADILQRYNPGVNFNSGNGIVYVP). The helical transmembrane segment at 233-253 (GVIAGIVIGVIVALLLILFIV) threads the bilayer. The Cytoplasmic portion of the chain corresponds to 254–617 (YYAYRKNKSK…EDLVSLMSGR (364 aa)). A phosphoserine mark is found at Ser266, Ser268, and Ser274. One can recognise a Protein kinase domain in the interval 322–594 (FNLSFKIGQG…YIVVALSTLF (273 aa)). ATP-binding positions include 328–336 (IGQGGFGAV) and Lys349. Position 390 is a phosphotyrosine (Tyr390). Asp441 serves as the catalytic Proton acceptor. Phosphothreonine occurs at positions 479 and 519.

This sequence belongs to the protein kinase superfamily. Ser/Thr protein kinase family. In terms of assembly, forms homodimers and homooligomers. Homodimerization is required to trigger plant defenses. Binds to chitin, chitosan and chito-oligomer oligosaccharide elicitors. Interaction with chitin octamer (NAG(8)) promotes homodimerization while shorter chitin oligomers inhibit homodimerization. Interacts with Pseudomonas syringae hopAB2/avrPtoB. Interacts (preferentially when unphosphorylated) with PBL27 at the plasma membrane. Binds to IOS1. Post-translationally, autophosphorylated. Autophosphorylation is induced by chitin and derivatives. In terms of processing, ubiquitinated and targeted to the proteasome by hopAB2/avrPtoB of Pseudomonas syringae pv. tomato DC3000. Expressed ubiquitously, with lowest expression in pollen.

It is found in the cell membrane. The catalysed reaction is L-seryl-[protein] + ATP = O-phospho-L-seryl-[protein] + ADP + H(+). It carries out the reaction L-threonyl-[protein] + ATP = O-phospho-L-threonyl-[protein] + ADP + H(+). Activated by chitin-mediated homodimerization. In terms of biological role, lysin motif (LysM) receptor kinase that functions as a cell surface receptor in chitin elicitor (chitooligosaccharides) signaling leading to innate immunity toward both biotic and abiotic stresses (e.g. tolerance to salinity, heavy-metal stresses, and Botrytis cinerea infection). Recognizes microbe-derived N-acetylglucosamine (NAG)-containing ligands. Involved in the resistance to pathogenic fungi Alternaria brassicicola and Erysiphe cichoracearum, probably by sensing microbe-associated molecular patterns (MAMP) and pathogen-associated molecular patterns (PAMP). Plays an essential role in detecting peptidoglycans (e.g. PGNs) and restricting bacterial growth. Target of the bacterial type III effector E3-ligase protein hopAB2/avrPtoB of Pseudomonas syringae pv. tomato DC3000 that mediates ubiquitination and subsequent proteolysis, thus blocking all defense responses by suppressing PAMP-triggered immunity (PTI). Mediates chitin-induced phosphorylation of PBL27. This is Chitin elicitor receptor kinase 1 (CERK1) from Arabidopsis thaliana (Mouse-ear cress).